The following is a 439-amino-acid chain: Ribosomal protein uS12 methylthiotransferase RimO (439 aa).

In terms of domain architecture, MTTase N-terminal spans proline 4–proline 114. [4Fe-4S] cluster-binding residues include cysteine 13, cysteine 49, cysteine 78, cysteine 147, cysteine 151, and cysteine 154. Positions leucine 133 to alanine 370 constitute a Radical SAM core domain. A TRAM domain is found at serine 373–alanine 439.

It belongs to the methylthiotransferase family. RimO subfamily. [4Fe-4S] cluster serves as cofactor.

The protein resides in the cytoplasm. The catalysed reaction is L-aspartate(89)-[ribosomal protein uS12]-hydrogen + (sulfur carrier)-SH + AH2 + 2 S-adenosyl-L-methionine = 3-methylsulfanyl-L-aspartate(89)-[ribosomal protein uS12]-hydrogen + (sulfur carrier)-H + 5'-deoxyadenosine + L-methionine + A + S-adenosyl-L-homocysteine + 2 H(+). Functionally, catalyzes the methylthiolation of an aspartic acid residue of ribosomal protein uS12. This is Ribosomal protein uS12 methylthiotransferase RimO from Bordetella parapertussis (strain 12822 / ATCC BAA-587 / NCTC 13253).